The sequence spans 160 residues: MITLYEAAIKTLITHRKQILKHPDSREILLALGLYWNKTHILLKCHECGKISLTGKHSTKCININCLLILAIKKKNKRMVDTLIGMGADVTYIHFLKNKTKLSYNQLSALKSNSQISLKEFRAICYILYSRLPKKIKQGIRLCKTMAGLCGELLCAFFAP.

Belongs to the asfivirus MGF 300 family.

In terms of biological role, plays a role in virus cell tropism, and may be required for efficient virus replication in macrophages. The polypeptide is Protein MGF 300-2R (African swine fever virus (isolate Pig/Kenya/KEN-50/1950) (ASFV)).